A 323-amino-acid chain; its full sequence is tRNA U34 carboxymethyltransferase (323 aa).

Residues Lys-91, Trp-105, Lys-110, Gly-130, 152 to 154 (DPT), 181 to 182 (IE), Met-196, Tyr-200, and Arg-315 contribute to the carboxy-S-adenosyl-L-methionine site.

The protein belongs to the class I-like SAM-binding methyltransferase superfamily. CmoB family. In terms of assembly, homotetramer.

It catalyses the reaction carboxy-S-adenosyl-L-methionine + 5-hydroxyuridine(34) in tRNA = 5-carboxymethoxyuridine(34) in tRNA + S-adenosyl-L-homocysteine + H(+). Functionally, catalyzes carboxymethyl transfer from carboxy-S-adenosyl-L-methionine (Cx-SAM) to 5-hydroxyuridine (ho5U) to form 5-carboxymethoxyuridine (cmo5U) at position 34 in tRNAs. The sequence is that of tRNA U34 carboxymethyltransferase from Escherichia coli O8 (strain IAI1).